A 250-amino-acid polypeptide reads, in one-letter code: Testis-expressed protein 101 (250 aa).

Positions 1–25 (MGACRIQYVLLIFLLIASRWTLVQN) are cleaved as a signal peptide. N-linked (GlcNAc...) asparagine glycans are attached at residues Asn45, Asn110, Asn134, and Asn160. In terms of domain architecture, UPAR/Ly6 spans 141-215 (CPTCVALGSC…VKETCSYQSF (75 aa)). Gly224 carries the GPI-anchor amidated glycine lipid modification. Residues 225–250 (ASQMPTSLWVLELLFPLLLLPLTHFP) constitute a propeptide, removed in mature form.

Interacts with VAMP3. Interacts with LY6K. Interacts with DPEP3; co-localized on the cell surface of spermatocytes, spermatids, and testicular spermatozoa, co-localized only in cytoplasmic droplets of caput and corpus epididymal sperm. Interacts with ADAM3; co-localized on sperm surface. Interacts with ADAM5. In terms of processing, N-glycosylated; by high mannose and/or biantennary complex and/or certain types of hybrid oligosaccharides; possesses different oligosaccharides chains according to its subcellular localization in the testis. Sheds from membrane raft by ACE and released from the cell surface of epididymal sperm while it passes through the caput epididymis leading to disappearance of TEX101 on spermatozoa; is essential to produce fertile spermatozoa. As to expression, detected in testis and ovary. Expressed in spermatocytes, spermatids and testicular spermatozoa, but not in spermatogonia or interstitial cells. Expressed abundantly in testicular germ cells (TGCs) but mostly disappeared from epididymal spermatozoa.

Its subcellular location is the cell membrane. It is found in the membrane raft. It localises to the cytoplasmic vesicle. The protein resides in the secretory vesicle. The protein localises to the acrosome. Its subcellular location is the secreted. Its function is as follows. Plays a role in fertilization by controlling binding of sperm to zona pellucida and migration of spermatozoa into the oviduct probably through molecule adhesion ADAM3. May play a role in signal transduction and promote protein tyrosine phosphorylation. This chain is Testis-expressed protein 101, found in Mus musculus (Mouse).